The primary structure comprises 387 residues: Succinate--CoA ligase [ADP-forming] subunit beta (387 aa).

The ATP-grasp domain maps to 9–236 (KELFAKHNVP…RAATDPLELK (228 aa)). ATP is bound by residues lysine 45, 52–54 (GRG), serine 94, and glutamate 99. The Mg(2+) site is built by asparagine 191 and aspartate 205. Substrate-binding positions include asparagine 256 and 318–320 (GIT).

It belongs to the succinate/malate CoA ligase beta subunit family. As to quaternary structure, heterotetramer of two alpha and two beta subunits. It depends on Mg(2+) as a cofactor.

The catalysed reaction is succinate + ATP + CoA = succinyl-CoA + ADP + phosphate. It carries out the reaction GTP + succinate + CoA = succinyl-CoA + GDP + phosphate. It participates in carbohydrate metabolism; tricarboxylic acid cycle; succinate from succinyl-CoA (ligase route): step 1/1. Its function is as follows. Succinyl-CoA synthetase functions in the citric acid cycle (TCA), coupling the hydrolysis of succinyl-CoA to the synthesis of either ATP or GTP and thus represents the only step of substrate-level phosphorylation in the TCA. The beta subunit provides nucleotide specificity of the enzyme and binds the substrate succinate, while the binding sites for coenzyme A and phosphate are found in the alpha subunit. The sequence is that of Succinate--CoA ligase [ADP-forming] subunit beta from Mycobacterium marinum (strain ATCC BAA-535 / M).